A 428-amino-acid polypeptide reads, in one-letter code: Synaptotagmin-1 (428 aa).

Residues 1–67 (MDSLLARVKR…KDKLINEIEN (67 aa)) lie on the Vesicular side of the membrane. Residues 16-50 (ALNPAQEGVTGGPDAAGLPDVSTSSPGGGGAGDKL) are disordered. Residues 68–92 (LPIWAIVLIIAGSLLFLVCCVYCVC) form a helical membrane-spanning segment. At 93–428 (RRSCRKRKKK…HTLQEVPEKN (336 aa)) the chain is on the cytoplasmic side. Ser-123 is subject to Phosphoserine; by PRKC2. Residues 147–395 (STKSEVKLGK…PIGRCVLGCN (249 aa)) form a phospholipid binding region. 2 consecutive C2 domains span residues 153–272 (KLGK…EDWK) and 286–419 (KLGD…AQWH). Positions 184, 190, 242, 243, 244, 247, 248, 250, 317, 323, 377, and 379 each coordinate Ca(2+).

It belongs to the synaptotagmin family. In terms of assembly, binds SNAP25. Isoform 3 binds SNAP25 with higher affinity. Ca(2+) is required as a cofactor.

It is found in the cytoplasmic vesicle. Its subcellular location is the secretory vesicle. The protein resides in the synaptic vesicle membrane. The protein localises to the synapse. Acts as inhibitor of neurotransmitter release. Overexpression leads to a decrease in the amplitude of the excitatory postsynaptic potential in dissected cholinergic and glutaminergic neurons while depletion with antisense oligonucleotides leads to an increase. Overexpression of isoform 1 blocks the reversal of synaptic depression by serotonin in sensory neurons. This Aplysia californica (California sea hare) protein is Synaptotagmin-1 (SYT1).